The following is a 229-amino-acid chain: Ribonuclease 3 (229 aa).

One can recognise an RNase III domain in the interval 5–127 (LSRLERQLGY…LIGAIYLDAG (123 aa)). Glutamate 40 lines the Mg(2+) pocket. Aspartate 44 is a catalytic residue. Aspartate 113 and glutamate 116 together coordinate Mg(2+). Glutamate 116 is a catalytic residue. The region spanning 154–224 (DPKTRLQEFL…AAAALIALGV (71 aa)) is the DRBM domain.

Belongs to the ribonuclease III family. In terms of assembly, homodimer. Requires Mg(2+) as cofactor.

Its subcellular location is the cytoplasm. The enzyme catalyses Endonucleolytic cleavage to 5'-phosphomonoester.. Digests double-stranded RNA. Involved in the processing of primary rRNA transcript to yield the immediate precursors to the large and small rRNAs (23S and 16S). Processes some mRNAs, and tRNAs when they are encoded in the rRNA operon. Processes pre-crRNA and tracrRNA of type II CRISPR loci if present in the organism. This Pseudomonas fluorescens (strain Pf0-1) protein is Ribonuclease 3.